Consider the following 276-residue polypeptide: Large ribosomal subunit protein uL2 (276 aa).

The tract at residues Thr-219 to Lys-276 is disordered.

This sequence belongs to the universal ribosomal protein uL2 family. In terms of assembly, part of the 50S ribosomal subunit. Forms a bridge to the 30S subunit in the 70S ribosome.

One of the primary rRNA binding proteins. Required for association of the 30S and 50S subunits to form the 70S ribosome, for tRNA binding and peptide bond formation. It has been suggested to have peptidyltransferase activity; this is somewhat controversial. Makes several contacts with the 16S rRNA in the 70S ribosome. The polypeptide is Large ribosomal subunit protein uL2 (Alkaliphilus oremlandii (strain OhILAs) (Clostridium oremlandii (strain OhILAs))).